Here is a 51-residue protein sequence, read N- to C-terminus: Large ribosomal subunit protein bL33 (51 aa).

The protein belongs to the bacterial ribosomal protein bL33 family.

This is Large ribosomal subunit protein bL33 from Idiomarina loihiensis (strain ATCC BAA-735 / DSM 15497 / L2-TR).